The chain runs to 463 residues: Ribosomal protein uS12 methylthiotransferase RimO (463 aa).

In terms of domain architecture, MTTase N-terminal spans 11-126 (PKIGFVSLGC…VMEVVHTHCP (116 aa)). [4Fe-4S] cluster contacts are provided by cysteine 20, cysteine 56, cysteine 85, cysteine 161, cysteine 165, and cysteine 168. A Radical SAM core domain is found at 147 to 388 (LTPRHYAYLK…MAVAEEVSTA (242 aa)). One can recognise a TRAM domain in the interval 391–463 (QRRVGQTMQV…QGHDLVGVPV (73 aa)).

Belongs to the methylthiotransferase family. RimO subfamily. Requires [4Fe-4S] cluster as cofactor.

The protein localises to the cytoplasm. The catalysed reaction is L-aspartate(89)-[ribosomal protein uS12]-hydrogen + (sulfur carrier)-SH + AH2 + 2 S-adenosyl-L-methionine = 3-methylsulfanyl-L-aspartate(89)-[ribosomal protein uS12]-hydrogen + (sulfur carrier)-H + 5'-deoxyadenosine + L-methionine + A + S-adenosyl-L-homocysteine + 2 H(+). Catalyzes the methylthiolation of an aspartic acid residue of ribosomal protein uS12. The chain is Ribosomal protein uS12 methylthiotransferase RimO from Acidovorax sp. (strain JS42).